A 451-amino-acid polypeptide reads, in one-letter code: NADP-specific glutamate dehydrogenase (451 aa).

Residue Lys114 is part of the active site.

This sequence belongs to the Glu/Leu/Phe/Val dehydrogenases family. In terms of assembly, homohexamer.

The catalysed reaction is L-glutamate + NADP(+) + H2O = 2-oxoglutarate + NH4(+) + NADPH + H(+). The polypeptide is NADP-specific glutamate dehydrogenase (GDH2) (Fusarium fujikuroi (Bakanae and foot rot disease fungus)).